The chain runs to 892 residues: MRMSAGLSLLLPLWGRTFLLLLSVAMAQSHWPSEAGRDWENQLEASMHSVLSDLHEAVPTVVGIPDGIAVVGRSFRVTIPMDLIASNGELVKVSAVGKEVLPSWLHWDPQSHTLEGLPLDTDKGVHYISVSATRLGANGSHVPQTSSVFSIEVYPEDHSEPQSVRAASPDPAEVVSSACAADEPVTVLTVILDADLTKMTPKQRIDLLHRMRSFSEVELHNMKLVPVVNNRLFDMSAFMAGPGNAKKVVENGALLSWKLGCSLNQNNVPDIHGVEAPAREGAMSAQLGYPVVGWHIANKKPPIPKRIRRQIHATPTPVTAIGPPTTAIQEPPSRIVPTPTSPAIAPPTETMAPPVRDPVPGKPTVTIRTRGAIIQTPTLGPIQPTRVSEAGTTVPGQIRPTMTIPGYVEPTAVATPPTTTTKKPRVSTPKPATPSTDSSTTTTRRPTKKPRTPRPVPRVTTKAPITRLETASPPTRIRTTTSGVPRGGEPNQRPELKNHIDRVDAWVGTYFEVKIPSDTFYDHEDTTTDKLKLTLKLREQQLVGEKSWVQFNSNSQLMYGLPDSSHVGKHEYFMHATDKGGLSAVDAFEIHVHKRPQGDRAPARFKAKFMGDPVPVVNDIHKKISLVKKLAFAFGDRNCSTITLQNITRGSILVEWTNNTLPLEPCPKEQIMALSQRIAEDNGKPRAAFSNALEPDFQASSIAVTGSGSCRHLQFIPVAPPRRVPSEVPSTDVPDRDPEKSSEDDVYLHTVIPAVVVAAILLIAGIIAMICYRKKRKGKLTLEDQATFIKKGVPIIFADELDDSKPPPSSSMPLILQEEKAPLPPPEYPNQSVPETTPLNQDTVGEYTPLREEDPNAPPYQPPPPFTAPMEGKGSRPKNMTPYRSPPPYVPP.

Positions 1–27 are cleaved as a signal peptide; that stretch reads MRMSAGLSLLLPLWGRTFLLLLSVAMA. Residues 28–750 lie on the Extracellular side of the membrane; that stretch reads QSHWPSEAGR…SSEDDVYLHT (723 aa). Residues 30–405 are required for laminin recognition; sequence HWPSEAGRDW…GQIRPTMTIP (376 aa). Positions 46 to 68 are O-glycosylated at one site; it reads SMHSVLSDLHEAVPTVVGIPDGI. N-linked (GlcNAc...) asparagine glycosylation occurs at asparagine 138. A disulfide bridge connects residues cysteine 179 and cysteine 261. Positions 313 to 482 are mucin-like domain; that stretch reads ATPTPVTAIG…PPTRIRTTTS (170 aa). O-linked (Man6P...) threonine glycans are attached at residues threonine 314, threonine 316, and threonine 376. The disordered stretch occupies residues 378-497; it reads TLGPIQPTRV…GEPNQRPELK (120 aa). A compositionally biased stretch (low complexity) spans 410-444; the sequence is PTAVATPPTTTTKKPRVSTPKPATPSTDSSTTTTR. Residues 460 to 482 form an O-glycosylated at seven sites with GalNAc region; sequence TTKAPITRLETASPPTRIRTTTS. The region spanning 600–709 is the Peptidase S72 domain; sequence RAPARFKAKF…SSIAVTGSGS (110 aa). Residues asparagine 638, asparagine 646, and asparagine 658 are each glycosylated (N-linked (GlcNAc...) asparagine). Residues cysteine 666 and cysteine 710 are joined by a disulfide bond. Residues 721-742 are disordered; it reads PRRVPSEVPSTDVPDRDPEKSS. Positions 733–742 are enriched in basic and acidic residues; sequence VPDRDPEKSS. The helical transmembrane segment at 751-771 threads the bilayer; that stretch reads VIPAVVVAAILLIAGIIAMIC. Over 772 to 892 the chain is Cytoplasmic; that stretch reads YRKKRKGKLT…YRSPPPYVPP (121 aa). The Nuclear localization signal motif lies at 773 to 779; sequence RKKRKGK. Position 787 is a phosphothreonine (threonine 787). A required for interaction with CAV3 region spans residues 816 to 892; that stretch reads LQEEKAPLPP…YRSPPPYVPP (77 aa). Residues 820–892 form a disordered region; it reads KAPLPPPEYP…YRSPPPYVPP (73 aa). A compositionally biased stretch (polar residues) spans 829–843; sequence PNQSVPETTPLNQDT. A compositionally biased stretch (pro residues) spans 856–867; it reads NAPPYQPPPPFT. The tract at residues 877–892 is required for binding DMD and UTRN; that stretch reads PKNMTPYRSPPPYVPP. A PPXY motif motif is present at residues 886 to 889; that stretch reads PPPY. Tyrosine 889 bears the Phosphotyrosine; by SRC mark.

Monomer. Heterodimer of alpha- and beta-dystroglycan subunits which are the central components of the dystrophin-glycoprotein complex. This complex then can form a dystrophin-associated glycoprotein complex (DGC) which is composed of three subcomplexes: a cytoplasmic complex comprised of DMD (or UTRN), DTNA and a number of syntrophins, such as SNTB1, SNTB2, SNTG1 and SNTG2, the transmembrane dystroglycan complex, and the sarcoglycan-sarcospan complex. Interacts (via the N-terminal of alphaDAG1) with LARGE1; the interaction enhances laminin binding. Interacts with SGCD. Interacts with AGR2 and AGR3. Interacts (betaDAG1) with DMD; the interaction is inhibited by phosphorylation on the PPXY motif. Interacts (betaDAG1, via its PPXY motif) with UTRN (via its WWW and ZZ domains); the interaction is inhibited by phosphorylation on the PPXY motif. Interacts (betaDAG1, via its phosphorylated PPXY motif) with the SH2 domain-containing proteins, FYN, CSK, NCK and SHC. Interacts (betaDAG1) with CAV3 (via a central WW-like domain); the interaction disrupts the binding of DMD. BetaDAG1 directly interacts with ANK3, but not with ANK2; this interaction does not interfere with DMD-binding and is required for retention at costameres. Identified in a dystroglycan complex that contains at least PRX, DRP2, UTRN, DMD and DAG1. Interacts with POMGNT1. BetaDAG1 interacts with CD93. In terms of processing, O-glycosylated. POMGNT1 catalyzes the initial addition of N-acetylglucosamine, giving rise to the GlcNAc(beta1-2)Man(alpha1-)O-Ser/Thr moiety and thus providing the necessary basis for the addition of further carbohydrate moieties. Heavily O-glycosylated comprising of up to two thirds of its mass and the carbohydrate composition differs depending on tissue type. Mucin-type O-glycosylation is important for ligand binding activity. O-mannosylation is found in high abundance in both brain and muscle where the most abundant glycan is Sia-alpha-2-3-Gal-beta-1-4-Glc-NAc-beta-1-2-Man. In muscle, glycosylation on Thr-314, Thr-316 and Thr-376 by a phosphorylated O-mannosyl glycan with the structure 2-(N-acetylamido)-2-deoxygalactosyl-beta-1,3-2-(N-acetylamido)-2-deoxyglucosyl-beta-1,4-6-phosphomannose is mediated by like-acetylglucosaminyltransferase (LARGE1) protein amd is required for laminin binding. O-glycosylated in the N-terminal region with a core 1 or possibly core 8 glycan. The brain form displays a unique glycosylation pattern which is absent in other tissues; this form shows enhanced binding to laminin LAMA5 compared to the skeletal muscle form. Post-translationally, N-glycosylated. Autolytic cleavage produces the alpha and beta subunits. In cutaneous cells, as well as in certain pathological conditions, shedding of beta-dystroglycan can occur releasing a peptide of about 30 kDa. In terms of processing, SRC-mediated phosphorylation of the PPXY motif of the beta subunit recruits SH2 domain-containing proteins, but inhibits binding to WWW domain-containing proteins, DMD and UTRN. This phosphorylation also inhibits nuclear entry.

It is found in the secreted. Its subcellular location is the extracellular space. The protein localises to the cell membrane. The protein resides in the cytoplasm. It localises to the cytoskeleton. It is found in the nucleus. Its subcellular location is the nucleoplasm. The protein localises to the sarcolemma. The protein resides in the postsynaptic cell membrane. Functionally, the dystroglycan complex is involved in a number of processes including laminin and basement membrane assembly, sarcolemmal stability, cell survival, peripheral nerve myelination, nodal structure, cell migration, and epithelial polarization. Extracellular peripheral glycoprotein that acts as a receptor for extracellular matrix proteins containing laminin-G domains. Receptor for laminin-2 (LAMA2) and agrin in peripheral nerve Schwann cells. Also acts as a receptor for laminin LAMA5. Its function is as follows. Transmembrane protein that plays important roles in connecting the extracellular matrix to the cytoskeleton. Acts as a cell adhesion receptor in both muscle and non-muscle tissues. Receptor for both DMD and UTRN and, through these interactions, scaffolds axin to the cytoskeleton. Also functions in cell adhesion-mediated signaling and implicated in cell polarity. The polypeptide is Dystroglycan 1 (Canis lupus familiaris (Dog)).